A 192-amino-acid polypeptide reads, in one-letter code: Peptidyl-tRNA hydrolase (192 aa).

Tyr-17 contributes to the tRNA binding site. Catalysis depends on His-22, which acts as the Proton acceptor. Phe-68, Asn-70, and Asn-116 together coordinate tRNA.

It belongs to the PTH family. Monomer.

Its subcellular location is the cytoplasm. It carries out the reaction an N-acyl-L-alpha-aminoacyl-tRNA + H2O = an N-acyl-L-amino acid + a tRNA + H(+). Functionally, hydrolyzes ribosome-free peptidyl-tRNAs (with 1 or more amino acids incorporated), which drop off the ribosome during protein synthesis, or as a result of ribosome stalling. Catalyzes the release of premature peptidyl moieties from peptidyl-tRNA molecules trapped in stalled 50S ribosomal subunits, and thus maintains levels of free tRNAs and 50S ribosomes. This chain is Peptidyl-tRNA hydrolase, found in Hydrogenovibrio crunogenus (strain DSM 25203 / XCL-2) (Thiomicrospira crunogena).